The following is a 310-amino-acid chain: Olfactory receptor 2A7 (310 aa).

Residues 1-24 are Extracellular-facing; it reads MGNNMTLITEFILLGFPLSPRMQM. Residue N4 is glycosylated (N-linked (GlcNAc...) asparagine). Residues 25–45 form a helical membrane-spanning segment; that stretch reads LLFALFSLFYAFTLLGNGTIV. Residues 46-53 are Cytoplasmic-facing; sequence GLICLDSR. A helical transmembrane segment spans residues 54–74; it reads LHTPMYFFLSHLAIVDIAYAC. The Extracellular portion of the chain corresponds to 75-96; that stretch reads NTVPQMLVNLLDPVKPISYAGC. The cysteines at positions 96 and 178 are disulfide-linked. A helical membrane pass occupies residues 97-117; sequence MTQTFLFLTFAITECLLLVVM. Residues 118 to 148 lie on the Cytoplasmic side of the membrane; it reads SYDRYVAICHPLRYSAIMSWRVCSTMAVTSW. A helical transmembrane segment spans residues 149–169; that stretch reads IIGVLLSLIHLVLLLPLPFCV. The Extracellular portion of the chain corresponds to 170–204; the sequence is SQKVNHFFCEITAILKLACADTHLNETMVLAGAVS. An N-linked (GlcNAc...) asparagine glycan is attached at N194. A helical transmembrane segment spans residues 205–225; the sequence is VLVGPFSSIVVSYACILGAIL. The Cytoplasmic segment spans residues 226–239; it reads KIQSEEGQRKAFST. Residues 240 to 260 traverse the membrane as a helical segment; sequence CSSHLCVVGLFYGTAIVMYVG. Over 261–273 the chain is Extracellular; sequence PRHGSPKEQKKYL. The chain crosses the membrane as a helical span at residues 274–291; the sequence is LLFHSLFNPMLNPLIYSL. Residues 292–310 lie on the Cytoplasmic side of the membrane; that stretch reads RNSDVKNTLKRVLRTQRAL.

This sequence belongs to the G-protein coupled receptor 1 family. As to expression, olfactory epithelium.

The protein resides in the cell membrane. Odorant receptor. The chain is Olfactory receptor 2A7 from Mus musculus (Mouse).